The chain runs to 876 residues: DNA topoisomerase 1 (876 aa).

Positions 3–150 (KSLVIVESPA…RYKRVVFNEI (148 aa)) constitute a Toprim domain. Position 9 (glutamate 9) interacts with Mg(2+). The tract at residues 37–69 (LPTAGQTATPTGKAAAASTKKASTTDKEQQKRE) is disordered. The segment covering 38–58 (PTAGQTATPTGKAAAASTKKA) has biased composition (low complexity). Residues 59–69 (STTDKEQQKRE) show a composition bias toward basic and acidic residues. Position 119 (aspartate 119) interacts with Mg(2+). In terms of domain architecture, Topo IA-type catalytic spans 166 to 582 (NMDGVNAQQA…EFFADFSRDL (417 aa)). Residues 200–205 (SAGRVQ) form an interaction with DNA region. The O-(5'-phospho-DNA)-tyrosine intermediate role is filled by tyrosine 327. 2 C4-type zinc fingers span residues 668–695 (CPIC…NPNC) and 717–742 (CDKC…NDAC).

This sequence belongs to the type IA topoisomerase family. Monomer. It depends on Mg(2+) as a cofactor.

It carries out the reaction ATP-independent breakage of single-stranded DNA, followed by passage and rejoining.. Functionally, releases the supercoiling and torsional tension of DNA, which is introduced during the DNA replication and transcription, by transiently cleaving and rejoining one strand of the DNA duplex. Introduces a single-strand break via transesterification at a target site in duplex DNA. The scissile phosphodiester is attacked by the catalytic tyrosine of the enzyme, resulting in the formation of a DNA-(5'-phosphotyrosyl)-enzyme intermediate and the expulsion of a 3'-OH DNA strand. The free DNA strand then undergoes passage around the unbroken strand, thus removing DNA supercoils. Finally, in the religation step, the DNA 3'-OH attacks the covalent intermediate to expel the active-site tyrosine and restore the DNA phosphodiester backbone. The protein is DNA topoisomerase 1 of Vibrio cholerae serotype O1 (strain ATCC 39315 / El Tor Inaba N16961).